A 154-amino-acid chain; its full sequence is 6,7-dimethyl-8-ribityllumazine synthase (154 aa).

Residues phenylalanine 26, 60–62 (ALE), and 84–86 (CII) contribute to the 5-amino-6-(D-ribitylamino)uracil site. (2S)-2-hydroxy-3-oxobutyl phosphate is bound at residue 89-90 (ET). The Proton donor role is filled by histidine 92. Asparagine 117 serves as a coordination point for 5-amino-6-(D-ribitylamino)uracil. Residue arginine 131 coordinates (2S)-2-hydroxy-3-oxobutyl phosphate.

It belongs to the DMRL synthase family.

The catalysed reaction is (2S)-2-hydroxy-3-oxobutyl phosphate + 5-amino-6-(D-ribitylamino)uracil = 6,7-dimethyl-8-(1-D-ribityl)lumazine + phosphate + 2 H2O + H(+). It participates in cofactor biosynthesis; riboflavin biosynthesis; riboflavin from 2-hydroxy-3-oxobutyl phosphate and 5-amino-6-(D-ribitylamino)uracil: step 1/2. Catalyzes the formation of 6,7-dimethyl-8-ribityllumazine by condensation of 5-amino-6-(D-ribitylamino)uracil with 3,4-dihydroxy-2-butanone 4-phosphate. This is the penultimate step in the biosynthesis of riboflavin. The sequence is that of 6,7-dimethyl-8-ribityllumazine synthase from Acidovorax sp. (strain JS42).